The chain runs to 605 residues: Phosphoenolpyruvate carboxykinase (ATP) (605 aa).

Residues 27 to 48 are compositionally biased toward low complexity; sequence SGPSSSFINNNNSNNNNNKSSN. Residues 27-67 form a disordered region; sequence SGPSSSFINNNNSNNNNNKSSNMFNHDHVNKTNLHPGGVKP. 307-314 is an ATP binding site; it reads GLSGTGKT.

This sequence belongs to the phosphoenolpyruvate carboxykinase (ATP) family.

The enzyme catalyses oxaloacetate + ATP = phosphoenolpyruvate + ADP + CO2. The protein operates within carbohydrate biosynthesis; gluconeogenesis. This Neurospora crassa (strain ATCC 24698 / 74-OR23-1A / CBS 708.71 / DSM 1257 / FGSC 987) protein is Phosphoenolpyruvate carboxykinase (ATP) (acu-6).